The primary structure comprises 234 residues: Sugar fermentation stimulation protein A (234 aa).

Positions 201 to 220 (LLTEAQQRGVEILAYKAEIS) form a DNA-binding region, H-T-H motif.

Belongs to the SfsA family.

Its function is as follows. Binds to DNA non-specifically. Could be a regulatory factor involved in maltose metabolism. The sequence is that of Sugar fermentation stimulation protein A from Escherichia fergusonii (strain ATCC 35469 / DSM 13698 / CCUG 18766 / IAM 14443 / JCM 21226 / LMG 7866 / NBRC 102419 / NCTC 12128 / CDC 0568-73).